A 2587-amino-acid polypeptide reads, in one-letter code: Clavatol synthase claF (2587 aa).

Residues 93 to 256 form an N-terminal acylcarrier protein transacylase domain (SAT) region; sequence LLSPLVVIVQ…TEVALSGRFH (164 aa). Residue cysteine 137 is the Nucleophile; for transacylase activity of the active site. The Proton donor/acceptor; for transacylase activity role is filled by histidine 256. The region spanning 383-799 is the Ketosynthase family 3 (KS3) domain; that stretch reads DDQIAVIGMA…GSNASMIITQ (417 aa). Residues cysteine 548, histidine 683, and histidine 722 each act as for beta-ketoacyl synthase activity in the active site. The segment at 912 to 1222 is malonyl-CoA:ACP transacylase (MAT) domain; that stretch reads CFGGQISTYV…ESLPLLAEAT (311 aa). The tract at residues 1284-1416 is N-terminal hotdog fold; that stretch reads PKGLTTFIGF…GSIVFLPASD (133 aa). The 312-residue stretch at 1284–1595 folds into the PKS/mFAS DH domain; that stretch reads PKGLTTFIGF…YRLVPMDSMR (312 aa). The interval 1315-1593 is product template (PT) domain; that stretch reads LTSANVALNT…ISYRLVPMDS (279 aa). The tract at residues 1436–1595 is C-terminal hotdog fold; the sequence is ASLLQGNGAD…YRLVPMDSMR (160 aa). Residues 1609–1635 form a disordered region; sequence STAAVSSKSTPVHAPTPTTTVSSTPSS. Positions 1617–1635 are enriched in low complexity; it reads STPVHAPTPTTTVSSTPSS. Residues 1654 to 1728 enclose the Carrier domain; the sequence is PDISAKMCEI…SLVSCIRSTL (75 aa). Serine 1688 carries the O-(pantetheine 4'-phosphoryl)serine modification. Active-site for methyltransferase activity residues include tyrosine 1947, histidine 2059, and glutamate 2085. The segment at 1952 to 2126 is methyltransferase (CMeT) domain; that stretch reads VNTVWIKQLE…ATYWEKVLQS (175 aa). Residues 2208–2452 form an NADPH-binding (R) domain region; it reads SLSSGQCVLV…KILPELDGTL (245 aa).

The cofactor is pantetheine 4'-phosphate.

The catalysed reaction is 3 malonyl-CoA + acetyl-CoA + AH2 + 2 S-adenosyl-L-methionine + H(+) = clavatol + A + 2 S-adenosyl-L-homocysteine + 3 CO2 + 4 CoA + H2O. The protein operates within secondary metabolite biosynthesis. Functionally, non-reducing polyketide synthase; part of the cla gene cluster that produces clavatol and ortho-quinone methide. The clavatol biosynthesis cluster cla and the terrestric acid cluster tra are both involved in the production of peniphenones and penilactones. The non-reducing PKS claF is responsible for the formation of clavatol from successive condensations of 3 malonyl-CoA units, presumably with a simple acetyl-CoA starter unit, and 2 methylation steps. The esterase claE probably collaborates with claF by catalyzing the hydrolysis of ACP-bound acyl intermediates to free the ACP from stalled intermediates. The clavatol oxidase claD then converts clavatol to hydroxyclavatol. Spontaneous dehydration of hydroxyclavatol leads to the accumulation of the highly active ortho-quinone methide. On the other hand, the PKS-NRPS hybrid traA is involved in the formation of crustosic acid, with the help of traB and traD. The polyketide synthase module (PKS) of traA is responsible for the synthesis of the polyketide backbone via the condensation of an acetyl-CoA starter unit with 3 malonyl-CoA units. The downstream nonribosomal peptide synthetase (NRPS) module then amidates the carboxyl end of the polyketide with L-malic acid. Because traA lacks a designated enoylreductase (ER) domain, the required activity is provided the enoyl reductase traG. Crustosic acid undergoes decarboxylation and isomerization to the terrestric acid, catalyzed by the 2-oxoglutarate-dependent dioxygenase traH. Both acids are further converted to the 2 gamma-butyrolactones (R)-5-methyltetronic acid and (S)-5-carboxylmethyltetronic acid, with involvement of the cytochrome P450 monooxygenase claJ. Spontaneous addition of the methide to these gamma-butyrolactones leads to peniphenone D and penilactone D, which undergo again stereospecific attacking by methide to give penilactones A and B. This chain is Clavatol synthase claF, found in Penicillium crustosum (Blue mold fungus).